The primary structure comprises 661 residues: Fusaric acid cluster transcription factor FUB12 (661 aa).

The zn(2)-C6 fungal-type DNA-binding region spans 17-48; that stretch reads CVPCRTRKIKCNAAVVGLPCGSCVSRECPDDC. Disordered stretches follow at residues 57–131 and 151–184; these read TVKV…RPPG and SAAQTDASDHQSNDEPDDSFNSQIHHWNPPPQLD. Residues 73 to 98 show a composition bias toward polar residues; the sequence is PDTNGSVLSPRQQQLPTNVSRQTTDS. Positions 99–109 are enriched in basic and acidic residues; it reads SHSDPVEESIH. Residues 110–119 are compositionally biased toward polar residues; the sequence is ASHTGSSLRN. The span at 120-129 shows a compositional bias: basic and acidic residues; the sequence is DTPHSRDRRP.

The protein resides in the nucleus. In terms of biological role, efflux pump involved in export of biosynthesis of fusaric acid, a mycotoxin with low to moderate toxicity to animals and humans, but with high phytotoxic properties. Constitutes a self-protecting mechanism of the fungus against critical levels of FSA within the cell. The sequence is that of Fusaric acid cluster transcription factor FUB12 from Fusarium oxysporum f. sp. lycopersici (strain 4287 / CBS 123668 / FGSC 9935 / NRRL 34936) (Fusarium vascular wilt of tomato).